The primary structure comprises 1711 residues: Protein chiffon (1711 aa).

3 disordered regions span residues 1 to 31 (MQPQ…AATP), 87 to 129 (KPEV…SRAD), and 244 to 307 (TKSK…IDSS). The interval 1 to 400 (MQPQSDKQSA…PALREKSKRI (400 aa)) is sufficient for interaction with and activation of Cdc7. Low complexity-rich tracts occupy residues 10 to 30 (ASRL…TAAT) and 97 to 109 (TPGT…TPTS). Phosphoserine occurs at positions 306 and 307. The segment at 307–356 (SEKQGGVCEICKLEYDILNIHLQSKDHELFAKNSDNFLALDTLIQSSADV) adopts a DBF4-type zinc-finger fold. Positions 314, 317, 327, and 333 each coordinate Zn(2+). The span at 365–378 (VESELDMDVDESLS) shows a compositional bias: acidic residues. Disordered stretches follow at residues 365 to 507 (VESE…DSPS), 531 to 647 (MFPR…KPQL), 733 to 771 (LDEE…REQR), 791 to 817 (TEVK…KVKQ), 908 to 945 (QDKG…YKNK), 1005 to 1025 (RSTS…CRNK), 1055 to 1157 (QRQD…RNQS), 1271 to 1290 (ESEG…PPTD), 1303 to 1329 (MGSA…RMSN), 1343 to 1370 (LKSN…ALPD), and 1383 to 1644 (LHPI…SKYA). Phosphoserine is present on residues serine 406, serine 407, serine 417, serine 432, and serine 435. Polar residues predominate over residues 429–439 (QGNSPGSLSEL). Residues 445 to 454 (PTTAAATPTT) show a composition bias toward low complexity. Serine 467 carries the post-translational modification Phosphoserine. A DNA-binding region (a.T hook) is located at residues 493-505 (PRGRGRPPNQVDS). Positions 537 to 546 (VPTTRSSSEL) are enriched in polar residues. A phosphoserine mark is found at serine 542, serine 543, and serine 544. The segment covering 549–560 (DVDRQTTSDVRG) has biased composition (basic and acidic residues). A compositionally biased stretch (low complexity) spans 563 to 575 (SISSASLDTSTSE). The span at 588 to 601 (IRKRAQAVGRRRKV) shows a compositional bias: basic residues. Over residues 793 to 812 (VKTSPSKSRTKIQKPSSPTK) the composition is skewed to polar residues. Residues 908–932 (QDKGEQIKLEDQKPAPKKEVKKEEE) show a composition bias toward basic and acidic residues. Residues 1006 to 1018 (STSSSSCSNSQRS) show a composition bias toward low complexity. At threonine 1081 the chain carries Phosphothreonine. 2 positions are modified to phosphoserine: serine 1091 and serine 1092. The segment covering 1092-1101 (SPRTTRSQAA) has biased composition (polar residues). The span at 1398-1407 (TTTTTTTTTT) shows a compositional bias: low complexity. The tract at residues 1400–1695 (TTTTTTTTSA…NAWRRTQRRA (296 aa)) is sufficient for interaction with Gcn5. Positions 1435–1445 (ADDKQNSREDA) are enriched in basic and acidic residues. Acidic residues-rich tracts occupy residues 1453 to 1475 (DVDE…DETM) and 1483 to 1518 (QDVE…EEQD). 2 stretches are compositionally biased toward polar residues: residues 1536–1545 (ISVTTPPEDS) and 1556–1591 (HNGQ…SCIS).

Component of the Dbf4-dependent kinase (DDK) complex consisting of Cdc7 and the Dbf4 ortholog chif. Interacts with Cdc7; the interaction is direct. Interacts with CG5790. In terms of assembly, component of the Chiffon histone acetyltransferase (CHAT) complex consisting of Ada3, Sgf29, Gcn5, chif/chiffon and Ada2b (Isoform A). Interacts (via C-terminus) with Gcn5; the interaction is direct but weak in the absence of other CHAT components. Post-translationally, may be proteolytically cleaved to produce a N-terminal 50 kDa product.

It is found in the nucleus. In terms of biological role, a bicistronic gene producing two proteins that are components of different complexes and have separate properties and functions. Full-length protein is proteolytically cleaved, producing a ~50kDa N-terminal product (Chiffon-A) that forms part of the DDK complex; it is unclear if the C-terminal proteolytic product is stable or functional. Alternative initiation from an internal ribosome entry site produces a C-terminal ~48kDa product (Chiffon-B or Isoform E) that forms part of the CHAT complex. Involved in regulation of gene expression during embryonic development. Its function is as follows. Regulatory component of the Dbf4-dependent kinase (DDK) complex. Required for the amplification stage, but not the preceding endoreplication stage of DNA replication in egg chamber follicle cells of the ovary. May be involved in initiation of DNA replication; activation of the chorion gene origins. May have a role in eye and thoracic bristle development. Required for female fertility; is not required for oogenesis but is required maternally for early embryo development. Functionally, component of the CHAT histone acetyltransferase complex, which predominantly acetylates histone H3. As part of the CHAT complex involved in acetylation of histone H3 on 'Lys-10' (H3K9ac), 'Lys-15' (H3K14ac) and 'Lys-19' (H3K18ac), but not 'Lys-25' (H3K24ac). May also regulate other histone acetyltransferase complexes. Essential for viability. Not required for early stages of embryonic development. May be involved in zygotic genome activation during embryogenesis. In Drosophila melanogaster (Fruit fly), this protein is Protein chiffon.